A 100-amino-acid polypeptide reads, in one-letter code: Large ribosomal subunit protein uL23 (100 aa).

The protein belongs to the universal ribosomal protein uL23 family. As to quaternary structure, part of the 50S ribosomal subunit. Contacts protein L29, and trigger factor when it is bound to the ribosome.

In terms of biological role, one of the early assembly proteins it binds 23S rRNA. One of the proteins that surrounds the polypeptide exit tunnel on the outside of the ribosome. Forms the main docking site for trigger factor binding to the ribosome. This is Large ribosomal subunit protein uL23 from Aggregatibacter actinomycetemcomitans (Actinobacillus actinomycetemcomitans).